Consider the following 608-residue polypeptide: Membrane protein insertase YidC (608 aa).

Residues 8–28 (LLLATALSFLVILGWYFFFPP) form a helical membrane-spanning segment. The tract at residues 33 to 61 (PQPATEVTETAPQGDTTAPAAAPSAGAAT) is disordered. A run of 5 helical transmembrane segments spans residues 378 to 398 (MGVA…PLAY), 448 to 468 (LPIL…FVTL), 482 to 502 (LSVP…WAAP), 506 to 526 (SLLS…SMWV), and 542 to 562 (IFAW…SGLV).

The protein belongs to the OXA1/ALB3/YidC family. Type 1 subfamily. Interacts with the Sec translocase complex via SecD. Specifically interacts with transmembrane segments of nascent integral membrane proteins during membrane integration.

It localises to the cell inner membrane. Required for the insertion and/or proper folding and/or complex formation of integral membrane proteins into the membrane. Involved in integration of membrane proteins that insert both dependently and independently of the Sec translocase complex, as well as at least some lipoproteins. Aids folding of multispanning membrane proteins. In Ruegeria sp. (strain TM1040) (Silicibacter sp.), this protein is Membrane protein insertase YidC.